A 121-amino-acid polypeptide reads, in one-letter code: Large ribosomal subunit protein bL19 (121 aa).

Belongs to the bacterial ribosomal protein bL19 family.

Functionally, this protein is located at the 30S-50S ribosomal subunit interface and may play a role in the structure and function of the aminoacyl-tRNA binding site. This Polaromonas sp. (strain JS666 / ATCC BAA-500) protein is Large ribosomal subunit protein bL19.